Here is a 188-residue protein sequence, read N- to C-terminus: Ribosome maturation factor RimM (188 aa).

In terms of domain architecture, PRC barrel spans 98-174 (EGTFYYHDLR…HLTADAPAGL (77 aa)). Positions 169–188 (DAPAGLIGPEPGEEDGAAES) are disordered. Residues 179–188 (PGEEDGAAES) show a composition bias toward acidic residues.

The protein belongs to the RimM family. As to quaternary structure, binds ribosomal protein uS19.

The protein localises to the cytoplasm. Functionally, an accessory protein needed during the final step in the assembly of 30S ribosomal subunit, possibly for assembly of the head region. Essential for efficient processing of 16S rRNA. May be needed both before and after RbfA during the maturation of 16S rRNA. It has affinity for free ribosomal 30S subunits but not for 70S ribosomes. This Deinococcus radiodurans (strain ATCC 13939 / DSM 20539 / JCM 16871 / CCUG 27074 / LMG 4051 / NBRC 15346 / NCIMB 9279 / VKM B-1422 / R1) protein is Ribosome maturation factor RimM.